Consider the following 569-residue polypeptide: Proline--tRNA ligase (569 aa).

It belongs to the class-II aminoacyl-tRNA synthetase family. ProS type 1 subfamily. In terms of assembly, homodimer.

Its subcellular location is the cytoplasm. The enzyme catalyses tRNA(Pro) + L-proline + ATP = L-prolyl-tRNA(Pro) + AMP + diphosphate. In terms of biological role, catalyzes the attachment of proline to tRNA(Pro) in a two-step reaction: proline is first activated by ATP to form Pro-AMP and then transferred to the acceptor end of tRNA(Pro). As ProRS can inadvertently accommodate and process non-cognate amino acids such as alanine and cysteine, to avoid such errors it has two additional distinct editing activities against alanine. One activity is designated as 'pretransfer' editing and involves the tRNA(Pro)-independent hydrolysis of activated Ala-AMP. The other activity is designated 'posttransfer' editing and involves deacylation of mischarged Ala-tRNA(Pro). The misacylated Cys-tRNA(Pro) is not edited by ProRS. The sequence is that of Proline--tRNA ligase from Dehalococcoides mccartyi (strain ATCC BAA-2100 / JCM 16839 / KCTC 5957 / BAV1).